A 294-amino-acid chain; its full sequence is 4-hydroxybenzoate octaprenyltransferase (294 aa).

The next 8 membrane-spanning stretches (helical) occupy residues Ile-24–Phe-44, Leu-47–Ile-67, Leu-99–Val-119, Phe-139–Phe-159, Gly-164–Tyr-184, Val-213–Ala-233, Pro-238–Ile-258, and Asn-274–Ala-294.

This sequence belongs to the UbiA prenyltransferase family. Mg(2+) serves as cofactor.

It localises to the cell inner membrane. It catalyses the reaction all-trans-octaprenyl diphosphate + 4-hydroxybenzoate = 4-hydroxy-3-(all-trans-octaprenyl)benzoate + diphosphate. It functions in the pathway cofactor biosynthesis; ubiquinone biosynthesis. Catalyzes the prenylation of para-hydroxybenzoate (PHB) with an all-trans polyprenyl group. Mediates the second step in the final reaction sequence of ubiquinone-8 (UQ-8) biosynthesis, which is the condensation of the polyisoprenoid side chain with PHB, generating the first membrane-bound Q intermediate 3-octaprenyl-4-hydroxybenzoate. The polypeptide is 4-hydroxybenzoate octaprenyltransferase (Aromatoleum aromaticum (strain DSM 19018 / LMG 30748 / EbN1) (Azoarcus sp. (strain EbN1))).